The following is a 1108-amino-acid chain: DNA-directed RNA polymerase subunit beta (1108 aa).

The interval 1081–1108 (SPRRTPARPTIDYSALDDTDDKEGATTF) is disordered.

Belongs to the RNA polymerase beta chain family. In terms of assembly, in cyanobacteria the RNAP catalytic core is composed of 2 alpha, 1 beta, 1 beta', 1 gamma and 1 omega subunit. When a sigma factor is associated with the core the holoenzyme is formed, which can initiate transcription.

It carries out the reaction RNA(n) + a ribonucleoside 5'-triphosphate = RNA(n+1) + diphosphate. Its function is as follows. DNA-dependent RNA polymerase catalyzes the transcription of DNA into RNA using the four ribonucleoside triphosphates as substrates. The protein is DNA-directed RNA polymerase subunit beta of Thermosynechococcus vestitus (strain NIES-2133 / IAM M-273 / BP-1).